A 129-amino-acid polypeptide reads, in one-letter code: Holo-[acyl-carrier-protein] synthase (129 aa).

Mg(2+)-binding residues include aspartate 8 and glutamate 60.

This sequence belongs to the P-Pant transferase superfamily. AcpS family. Mg(2+) is required as a cofactor.

It is found in the cytoplasm. The catalysed reaction is apo-[ACP] + CoA = holo-[ACP] + adenosine 3',5'-bisphosphate + H(+). In terms of biological role, transfers the 4'-phosphopantetheine moiety from coenzyme A to a Ser of acyl-carrier-protein. The protein is Holo-[acyl-carrier-protein] synthase of Anaeromyxobacter sp. (strain Fw109-5).